Reading from the N-terminus, the 65-residue chain is Large ribosomal subunit protein bL35 (65 aa).

Residues 1–23 are disordered; it reads MPKMKSNRGAAKRFKRTGSGKFK. Positions 10 to 23 are enriched in basic residues; it reads AAKRFKRTGSGKFK.

This sequence belongs to the bacterial ribosomal protein bL35 family.

This is Large ribosomal subunit protein bL35 from Acidithiobacillus ferrooxidans (strain ATCC 53993 / BNL-5-31) (Leptospirillum ferrooxidans (ATCC 53993)).